Reading from the N-terminus, the 677-residue chain is Amine oxidase [copper-containing] alpha 2, peroxisomal (677 aa).

320–331 (YLDCGEFGCGQT) is a binding site for substrate. Aspartate 322 (proton acceptor) is an active-site residue. Cysteine 341 and cysteine 367 are joined by a disulfide. 407-412 (VGNYDY) lines the substrate pocket. Tyrosine 410 serves as the catalytic Schiff-base intermediate with substrate; via topaquinone. Tyrosine 410 bears the 2',4',5'-topaquinone mark. The Cu cation site is built by histidine 466 and histidine 468. Mn(2+)-binding residues include aspartate 477, aspartate 617, and isoleucine 618. Histidine 628 contributes to the Cu cation binding site.

This sequence belongs to the copper/topaquinone oxidase family. As to quaternary structure, homodimer. Cu cation serves as cofactor. The cofactor is Zn(2+). Requires L-topaquinone as cofactor. In terms of processing, topaquinone (TPQ) is generated by copper-dependent autoxidation of a specific tyrosyl residue. As to expression, expressed exclusively in leaves.

The protein resides in the peroxisome. The enzyme catalyses a primary methyl amine + O2 + H2O = an aldehyde + H2O2 + NH4(+). The protein operates within amine and polyamine degradation; putrescine degradation. Its function is as follows. Copper amine oxidase that can use putrescine and spermidine as substrates. Involved in putrescine catabolism in peroxisomes in response to salt stress. Regulates arginine-dependent nitric oxide (NO) production, a key signaling molecule regulating a wide range of physiological processes including responses to salt stress, by influencing arginine bioavailability. Modulates primary root growth. This Arabidopsis thaliana (Mouse-ear cress) protein is Amine oxidase [copper-containing] alpha 2, peroxisomal.